The primary structure comprises 419 residues: Equilibrative nucleotide transporter 5 (419 aa).

11 helical membrane passes run 20–40, 56–76, 86–106, 108–128, 142–162, 186–206, 265–285, 292–312, 327–347, 354–374, and 393–413; these read MVVC…LLSV, VLTF…AYNE, LIGY…DLAT, GHGG…FGFA, LMCP…GALT, IFLA…AYVF, YVVN…GFLY, GLGS…DLVG, KGLT…YFTA, WMIL…VCIL, and LVLF…LWLI.

It belongs to the SLC29A/ENT transporter (TC 2.A.57) family.

Its subcellular location is the cell membrane. In terms of biological role, may be involved in nucleoside transport. The chain is Equilibrative nucleotide transporter 5 (ENT5) from Arabidopsis thaliana (Mouse-ear cress).